Here is a 167-residue protein sequence, read N- to C-terminus: Transmembrane protein 229B (167 aa).

The Cytoplasmic portion of the chain corresponds to 1–14 (MAAAEPLTAFSRWY). Residues 15–35 (LYAIHGYFCEVMFTAAWEFVV) traverse the membrane as a helical segment. The Extracellular segment spans residues 36–40 (NFNWK). Residues 41–61 (FPGVTSVWALFIYGTSILIVE) form a helical membrane-spanning segment. Topologically, residues 62-72 (KMYLYLKDKCH) are cytoplasmic. A helical transmembrane segment spans residues 73–93 (ILVRCFIYTLWTYLWEFTTGL). The Extracellular portion of the chain corresponds to 94–109 (ILRQFNACPWDYSQFD). Residues 110 to 130 (FDFMGLITLEYAIPWFCASFI) form a helical membrane-spanning segment. Topologically, residues 131-167 (MEQLVIRNTLRLRFDETAEPGAPTVPVALANGHVKTD) are cytoplasmic.

Belongs to the TMEM229 family.

Its subcellular location is the membrane. The protein is Transmembrane protein 229B (TMEM229B) of Gallus gallus (Chicken).